A 468-amino-acid chain; its full sequence is Ammonium transporter Amt2 (468 aa).

A run of 12 helical transmembrane segments spans residues 1-21 (MVGR…TAGA), 39-59 (FVWA…FAML), 77-97 (LMDF…LMMG), 123-143 (LWFF…GSIA), 156-176 (AVVS…GGWL), 194-214 (FAGS…AVML), 236-256 (LAFA…FNAG), 268-288 (IIAS…MAIT), 297-317 (VGMT…PCAW), 321-341 (WSSV…YWWL), 350-370 (VGAI…LGIF), and 400-420 (LISA…LFWI).

This sequence belongs to the ammonia transporter channel (TC 1.A.11.2) family. As to quaternary structure, homotrimer.

The protein localises to the cell membrane. Functionally, involved in the uptake of ammonium/ammonia (NH(4)(+)/NH(3)). Transport is electrogenic. This chain is Ammonium transporter Amt2, found in Archaeoglobus fulgidus (strain ATCC 49558 / DSM 4304 / JCM 9628 / NBRC 100126 / VC-16).